The sequence spans 398 residues: Phospholipase C (398 aa).

An N-terminal signal peptide occupies residues 1 to 28 (MKRKICKALICAALATSLWAGASTKVYA). The Zn(2+) site is built by Trp29, His39, Asp84, His96, His154, Asp158, His164, His176, and Glu180. The Zn-dependent PLC domain occupies 29–278 (WDGKIDGTGT…HDVSEGNDPS (250 aa)). Residues 275–283 (NDPSVGKNV) form a linker region. One can recognise a PLAT domain in the interval 284–398 (KELVAYISTS…ISGNSTYNIK (115 aa)). Residues Asp297, Gly299, Thr300, Asp301, Asp321, Asn322, Gly324, Asn325, Asp326, Asp364, and Ala365 each coordinate Ca(2+).

It belongs to the bacterial zinc-metallophospholipase C family. Ca(2+) is required as a cofactor. It depends on Zn(2+) as a cofactor.

Its subcellular location is the secreted. The enzyme catalyses a 1,2-diacyl-sn-glycero-3-phosphocholine + H2O = phosphocholine + a 1,2-diacyl-sn-glycerol + H(+). Its function is as follows. Bacterial hemolysins are exotoxins that attack blood cell membranes and cause cell rupture. Constitutes an essential virulence factor in gas gangrene. Binds to eukaryotic membranes where it hydrolyzes both phosphatidylcholine and sphingomyelin. The diacylglycerol produced can activate both the arachidonic acid pathway, leading to modulation of the inflammatory response cascade and thrombosis, and protein kinase C, leading to activation of eukaryotic phospholipases and further membrane damage. Acts on human and mouse erythrocytes, but not on rabbit or horse erythrocytes. This is Phospholipase C (plc) from Clostridium perfringens (strain ATCC 13124 / DSM 756 / JCM 1290 / NCIMB 6125 / NCTC 8237 / Type A).